A 314-amino-acid chain; its full sequence is UPF0761 membrane protein VP0125 (314 aa).

Helical transmembrane passes span 41–61 (YLAYITLLSIVPMLTVLLSIL), 104–124 (MSAVGGGFLFIAALMLISNID), 139–159 (LVFSFSMYWMVLTLGPILVGA), 185–205 (FLRWLPLLLSFFAFLGLYILV), 217–237 (VGAAVAAILFELSKKGFALYI), and 249–269 (ALAAIPILFVWVYLCWMIVLL). A disordered region spans residues 295–314 (ESQLANEGSESSDSANSTSQ).

The protein belongs to the UPF0761 family.

The protein resides in the cell inner membrane. The sequence is that of UPF0761 membrane protein VP0125 from Vibrio parahaemolyticus serotype O3:K6 (strain RIMD 2210633).